The following is an 83-amino-acid chain: Consomatin Rs1 (83 aa).

A signal peptide spans 1–22 (MQTAYWVMVMMMVWITAPLSEG). The propeptide occupies 23–55 (GKLNNVIRGLVPDDVTPKRISQSLISRRRFDSR). C62 and C67 are disulfide-bonded. Residue W64 is modified to D-tryptophan. Residue P68 is modified to 4-hydroxyproline. Residues 71-83 (LHGDNYDLKEKDK) constitute a propeptide that is removed on maturation.

Belongs to the conotoxin C superfamily. Consomatin family. As to expression, expressed by the venom duct.

It localises to the secreted. Its function is as follows. Moderately activates human somatostatin receptors (SSTR) with a preferential activation of SSTR1 and SSTR4. In vivo, does not cause behavioral changes in mice within a few minutes of intracranial injection, but causes a progressive loss of movement thereafter. Four to five hours after injection, mice recover, even with the highest dose tested. Shows antinociception and antihyperalgesia activities in two mouse models of acute pain, most probably by acting outside the central nervous system. This chain is Consomatin Rs1, found in Conus raulsilvai (Sea snail).